We begin with the raw amino-acid sequence, 163 residues long: Succinate dehydrogenase assembly factor 2, mitochondrial (163 aa).

This sequence belongs to the SDHAF2 family. As to quaternary structure, interacts with the flavoprotein subunit within the SDH catalytic dimer.

Its subcellular location is the mitochondrion matrix. Its function is as follows. Plays an essential role in the assembly of succinate dehydrogenase (SDH), an enzyme complex (also referred to as respiratory complex II) that is a component of both the tricarboxylic acid (TCA) cycle and the mitochondrial electron transport chain, and which couples the oxidation of succinate to fumarate with the reduction of ubiquinone (coenzyme Q) to ubiquinol. Required for flavinylation (covalent attachment of FAD) of the flavoprotein subunit of the SDH catalytic dimer. In Kluyveromyces lactis (strain ATCC 8585 / CBS 2359 / DSM 70799 / NBRC 1267 / NRRL Y-1140 / WM37) (Yeast), this protein is Succinate dehydrogenase assembly factor 2, mitochondrial.